Here is a 382-residue protein sequence, read N- to C-terminus: Probable cytosolic iron-sulfur protein assembly protein 1 (382 aa).

WD repeat units lie at residues 9 to 48 (AHHDKIWSVSSHQKLPLLATGSSDKTSAIFRLSETEKFPR), 55 to 107 (THTR…DNDE), 138 to 178 (GHEH…EEFE), 185 to 224 (EHQQDVKHVIWHPTQNLLASSSYDDTICIYRQEYDDDDWG), 231 to 278 (GHQG…SETN), 303 to 342 (AHTYPVYSVVWSSVSGRIASAGADGKIAVYKQTDGVWEIE), and 349 to 382 (HGVHEINTLAWSKLDDNREVLVSGGDDGYVNVWE).

Belongs to the WD repeat CIA1 family. Interacts with NAR1.

Its subcellular location is the cytoplasm. The protein resides in the nucleus. Essential component of the cytosolic iron-sulfur (Fe/S) protein assembly machinery. Required for the maturation of extramitochondrial Fe/S proteins. This is Probable cytosolic iron-sulfur protein assembly protein 1 from Meyerozyma guilliermondii (strain ATCC 6260 / CBS 566 / DSM 6381 / JCM 1539 / NBRC 10279 / NRRL Y-324) (Yeast).